We begin with the raw amino-acid sequence, 670 residues long: Transcription factor 4 (670 aa).

An essential for MYOD1 inhibition region spans residues 1–83; it reads MHHQQRMAAL…GTPYDHMTSR (83 aa). Disordered regions lie at residues 24-244, 262-320, 335-378, 406-426, 465-573, and 637-670; these read AMFS…LGNS, LSYP…SQTG, HTNN…EGPL, PSTAVPGGHGDMHGIMGPSHN, SLLP…MANN, and KRREEEKVSSEPPPLSLAGPHPGMGDAANHMGQM. Positions 29–49 are enriched in polar residues; it reads PVSSGKNGPTSLASGHFTGSN. Phosphoserine is present on residues Ser-66, Ser-87, and Ser-92. Composition is skewed to polar residues over residues 107 to 125, 136 to 154, 205 to 215, and 265 to 305; these read GSYSSYGRENVQGCHQQSL, GTLSPTKPGSQYYQYSSNN, PAASTFPSSFF, and PSHS…TDSI. A compositionally biased stretch (low complexity) spans 336–347; sequence TNNSFSSNPSTP. Residues 364 to 373 show a composition bias toward polar residues; the sequence is NGGQASSSPN. Ser-371 carries the post-translational modification Phosphoserine. Residues 378 to 399 form a leucine-zipper region; that stretch reads LHSLQSRIEDRLERLDDAIHVL. 2 stretches are compositionally biased toward low complexity: residues 466 to 479 and 502 to 511; these read LLPNQVPVPQLPVQ and GQSVSSGSSE. The residue at position 514 (Ser-514) is a Phosphoserine. Basic and acidic residues-rich tracts occupy residues 526–542 and 558–573; these read KSSEDKKLDDDKKDIKS and PEQKAEREKERRMANN. The bHLH domain maps to 567 to 620; that stretch reads ERRMANNARERLRVRDINEAFKELGRMVQLHLKSDKPQTKLLILHQAVAVILSL. Positions 622 to 645 are class A specific domain; the sequence is QQVRERNLNPKAACLKRREEEKVS.

In terms of assembly, efficient DNA binding requires dimerization with another bHLH protein. Isoform 2 seems to form inactive heterodimers with MYOD1. Interacts with HIVEP2. Interacts with NEUROD2. Interacts with AGBL1. Interacts with BHLHA9. As to expression, expressed in the cerebral cortex, Purkinje and granule cell layers of the cerebellum, olfactory neuroepithelium, pyramidal cells of hippocampal layers CA1-CA4, and in the granular cells of the dentate gyrus.

The protein resides in the nucleus. Its function is as follows. Transcription factor that binds to the immunoglobulin enhancer Mu-E5/KE5-motif. Involved in the initiation of neuronal differentiation. Activates transcription by binding to the E box (5'-CANNTG-3'). Isoform 2 inhibits MYOD1 activation of the cardiac alpha-actin promoter. Binds to the E-box present in the somatostatin receptor 2 initiator element (SSTR2-INR) to activate transcription. May have a regulatory function in developmental processes as well as during neuronal plasticity. This is Transcription factor 4 (Tcf4) from Mus musculus (Mouse).